The sequence spans 364 residues: DNA replication and repair protein RecF (364 aa).

30-37 (GENGSGKT) serves as a coordination point for ATP.

This sequence belongs to the RecF family.

The protein resides in the cytoplasm. In terms of biological role, the RecF protein is involved in DNA metabolism; it is required for DNA replication and normal SOS inducibility. RecF binds preferentially to single-stranded, linear DNA. It also seems to bind ATP. In Xylella fastidiosa (strain M23), this protein is DNA replication and repair protein RecF.